The sequence spans 399 residues: Tyrosine--tRNA ligase 2 (399 aa).

The 'HIGH' region motif lies at 43–52 (PTAPDLHLGH). The 'KMSKS' region motif lies at 227–231 (KMSKS). Residue Lys-230 participates in ATP binding. The S4 RNA-binding domain maps to 338 to 398 (ITLLDLCSVA…IGKRYKFRIG (61 aa)).

This sequence belongs to the class-I aminoacyl-tRNA synthetase family. TyrS type 2 subfamily. Homodimer.

The protein localises to the cytoplasm. The catalysed reaction is tRNA(Tyr) + L-tyrosine + ATP = L-tyrosyl-tRNA(Tyr) + AMP + diphosphate + H(+). Catalyzes the attachment of tyrosine to tRNA(Tyr) in a two-step reaction: tyrosine is first activated by ATP to form Tyr-AMP and then transferred to the acceptor end of tRNA(Tyr). The sequence is that of Tyrosine--tRNA ligase 2 from Photorhabdus laumondii subsp. laumondii (strain DSM 15139 / CIP 105565 / TT01) (Photorhabdus luminescens subsp. laumondii).